The chain runs to 254 residues: Capsid protein (254 aa).

The Bipartite nuclear localization signal motif lies at 9 to 35; that stretch reads VYSRKRGRYGKTYQALGVKSQRELEQL.

It belongs to the geminiviridae capsid protein family. As to quaternary structure, homomultimer. Interacts with the movement protein. Binds to single-stranded and double-stranded viral DNA.

It is found in the virion. The protein localises to the host nucleus. Encapsidates the viral genome into characteristic twinned ('geminate') particles. Binds the genomic viral ssDNA and shuttles it into and out of the cell nucleus. Plays a role in protection of the genome from degradation, virus acquisition and transmission by insect vectors, infectivity, and systemic movement. The CP of monopartite geminiviruses is absolutely essential for virus movement. In Tobacco yellow dwarf virus (strain Australia) (TYDV), this protein is Capsid protein.